The sequence spans 648 residues: A-type voltage-gated potassium channel KCND1 (648 aa).

The Cytoplasmic segment spans residues 1-183 (MAAGVATWLP…RAFENPHTST (183 aa)). The segment at 2–20 (AAGVATWLPFARAAAVGWL) is interaction with KCNIP1, KCNIP2, and other family members. Residues 2–20 (AAGVATWLPFARAAAVGWL) are interaction with KCNIP2. His-104, Cys-131, and Cys-132 together coordinate Zn(2+). Residues 144–164 (AERLAEDEEAEQAGDGPTLPA) are disordered. The chain crosses the membrane as a helical span at residues 184 to 205 (AALVFYYVTGFFIAVSVIANVV). The Extracellular segment spans residues 206 to 230 (ETIPCRSPTRRPPREQPCGDRFPLA). Residues 231-252 (FFCMDTACVLIFTGEYLLRLFA) form a helical membrane-spanning segment. At 253–263 (APSRCRFLRSV) the chain is on the cytoplasmic side. The helical transmembrane segment at 264–284 (MSLIDVVAILPYYIGLFMPKN) threads the bilayer. Over 285 to 287 (EDV) the chain is Extracellular. Residues 288 to 308 (SGAFVTLRVFRVFRIFKFSRH) traverse the membrane as a helical; Voltage-sensor segment. The Cytoplasmic portion of the chain corresponds to 309–323 (SQGLRILGYTLKSCA). The interval 310–323 (QGLRILGYTLKSCA) is S4-S5 linker. A helical membrane pass occupies residues 324-345 (SELGFLLFSLTMAIIIFATVMF). At 346–359 (YAEKGTNKTNFTSI) the chain is on the extracellular side. N-linked (GlcNAc...) asparagine glycans are attached at residues Asn-352 and Asn-355. The helical intramembrane region spans 360-371 (PAAFWYTIVTMT). Positions 372–377 (TLGYGD) match the Selectivity filter motif. The stretch at 372–379 (TLGYGDMV) is an intramembrane region. The Extracellular segment spans residues 380–386 (PSTIAGK). A helical transmembrane segment spans residues 387–415 (IFGSICSLSGVLVIALPVPVIVSNFSRIY). The Cytoplasmic segment spans residues 416-648 (HQNQRADKRR…LPETVKISSL (233 aa)). At Ser-458 the chain carries Phosphoserine. A mediates dendritic targeting region spans residues 474–489 (FEQQHHHLLHCLEKTT). The required for dendritic targeting stretch occupies residues 474-489 (FEQQHHHLLHCLEKTT). At Ser-555 the chain carries Phosphoserine. The tract at residues 601–636 (IPTPPANTPDESQPSSPGGGGGGASSTLRNSSLGTP) is disordered.

This sequence belongs to the potassium channel family. D (Shal) (TC 1.A.1.2) subfamily. Kv4.1/KCND1 sub-subfamily. Component of heteromultimeric potassium channels. Identified in potassium channel complexes containing KCND1, KCND2, KCND3, KCNIP1, KCNIP2, KCNIP3, KCNIP4, DPP6 and DPP10.

The protein resides in the cell membrane. The catalysed reaction is K(+)(in) = K(+)(out). Its function is as follows. A-type voltage-gated potassium channel that mediates transmembrane potassium transport in excitable membranes in the brain. Mediates A-type current I(SA) in suprachiasmatic nucleus (SCN) neurons. Exhibits a low-threshold A-type current with a hyperpolarized steady-state inactivation midpoint and the recovery process was steeply voltage-dependent, with recovery being markedly faster at more negative potentials. May regulates repetitive firing rates in the suprachiasmatic nucleus (SCN) neurons and circadian rhythms in neuronal excitability and behavior. Contributes to the regulation of the circadian rhythm of action potential firing in suprachiasmatic nucleus neurons, which regulates the circadian rhythm of locomotor activity. The regulatory subunit KCNIP1 modulates the kinetics of channel inactivation, increases the current amplitudes and accelerates recovery from inactivation, shifts activation in a depolarizing direction. The regulatory subunit DPP10 decreases the voltage sensitivity of the inactivation channel gating. In Bos taurus (Bovine), this protein is A-type voltage-gated potassium channel KCND1.